The chain runs to 305 residues: Putative cuticle collagen 90 (305 aa).

2 disordered regions span residues 95–117 (AGPP…GDLG) and 146–305 (PPGQ…AKRH). 4 triple-helical region regions span residues 96-125 (GPPG…SGIS), 142-204 (GPAG…PGTA), 208-252 (GAVG…NGRD), and 256-270 (GQPG…VGKD). Residues 150–162 (QGPVGPQGFPGVV) are compositionally biased toward low complexity. Over residues 278-288 (ARRDSKTESVH) the composition is skewed to basic and acidic residues.

Belongs to the cuticular collagen family. As to quaternary structure, collagen polypeptide chains are complexed within the cuticle by disulfide bonds and other types of covalent cross-links.

In terms of biological role, nematode cuticles are composed largely of collagen-like proteins. The cuticle functions both as an exoskeleton and as a barrier to protect the worm from its environment. This is Putative cuticle collagen 90 (col-90) from Caenorhabditis elegans.